The following is a 165-amino-acid chain: NADPH-dependent 7-cyano-7-deazaguanine reductase (165 aa).

C56 serves as the catalytic Thioimide intermediate. D63 (proton donor) is an active-site residue. Substrate-binding positions include 78–80 (VES) and 97–98 (HE).

This sequence belongs to the GTP cyclohydrolase I family. QueF type 1 subfamily.

It localises to the cytoplasm. The enzyme catalyses 7-aminomethyl-7-carbaguanine + 2 NADP(+) = 7-cyano-7-deazaguanine + 2 NADPH + 3 H(+). The protein operates within tRNA modification; tRNA-queuosine biosynthesis. In terms of biological role, catalyzes the NADPH-dependent reduction of 7-cyano-7-deazaguanine (preQ0) to 7-aminomethyl-7-deazaguanine (preQ1). The polypeptide is NADPH-dependent 7-cyano-7-deazaguanine reductase (Oceanobacillus iheyensis (strain DSM 14371 / CIP 107618 / JCM 11309 / KCTC 3954 / HTE831)).